The sequence spans 205 residues: Holliday junction resolvase RecU (205 aa).

Mg(2+) is bound by residues Thr-83, Asp-85, Glu-98, and Gln-117.

It belongs to the RecU family. Mg(2+) is required as a cofactor.

The protein resides in the cytoplasm. The enzyme catalyses Endonucleolytic cleavage at a junction such as a reciprocal single-stranded crossover between two homologous DNA duplexes (Holliday junction).. Its function is as follows. Endonuclease that resolves Holliday junction intermediates in genetic recombination. Cleaves mobile four-strand junctions by introducing symmetrical nicks in paired strands. Promotes annealing of linear ssDNA with homologous dsDNA. Required for DNA repair, homologous recombination and chromosome segregation. This is Holliday junction resolvase RecU from Streptococcus suis (strain 98HAH33).